Reading from the N-terminus, the 69-residue chain is MMKTRACSNPMNEGVNLEQIPYDLVLEILLKLSAKSIARFRCVSKLWDSTFRSRYFTELLFIISSSMQI.

In terms of domain architecture, F-box spans 14–59 (GVNLEQIPYDLVLEILLKLSAKSIARFRCVSKLWDSTFRSRYFTEL).

The chain is Putative F-box protein At2g33705 from Arabidopsis thaliana (Mouse-ear cress).